The following is a 1934-amino-acid chain: MADREMAAFGAAAFLRKSEKERLEAQTRPFDLKKDVFVPDDKEEFVKAKIVSREGGKVTAETENGKTVTVKEDQVMQQNPPKFDKIEDMAMLTFLHEPAVLYNLKDGYASWMIYTYSGLFCVTVNPYKWLPVYNAEVVAAYRGKKRSEAPAHIFSISDNAYQYMLTDRENQSILITGESGAGKTVNTKRVIQYFAVIAAIGDRSKKDQTPGKGTLEDQIIQANPALEAFGNAKTVRNDNSSRFGKFIRIHFGATGKLASADIETYLLEKSRVIFQLKAERDYHIFYQILSNKKPELLDMLLITNNPYDYAFIPQGETTVASIDDSEELMATDSAFDVLGFTSEEKNSIYKLTGAIMHFGNMKFKQKQREEQADRDGTEEEDKSAYLMGLNSADLLKGMCHPRVKVGNEYVTKGQNVQQVSYAIGALAKSVYEKMFNWMVTRINATLETKQPRQYFIGVLDIAGFEIFDFNSFEQLCINFTNEKLQQFFNHHMFVLEQEEYKKEGIEWTFIDFGMDLQACIDLIEKPMRIMSILEEECMFPKATDMTFKAKLYDNHLGKSNNFQKPRNVKGKQEAHFSLVHYAGTVDYNILGWLQKNKDPLNETVVGLYQKSSLKLLSNLFANYAGADAPVDKGKGKAKKGSSFQTVSVLHRENLNKLMTNLRSTHPHFVRCIIPNETKSPGVMDNPLVMHQLRCNGVLEGIRICRKGFPNRILYGDFRQRYRILNPAAIPEGQFIDSRKGAEKLLSSLDIDHNQYKFGHTKVFFKAGLLGLLEEMRDERLSRIITRIQAQSRGLLSRMEFKKLLERRDSLLVIQWNIRAFMGVKNWPWMKLYFKIKPLLKSAETEKEMATMKEEFGRVKDALEKSEARRKELEEKMVSLLQEKNDLQLQVQAEQDNLADAEERCDQLIKNKIQLEAKVKEMTERLEDEEEMNAELTAKKRKLEDECSELKRDIDDLELTLAKVEKDKHATENKVKNLTEEMAGLDEIIAKLTKEKKALQEAHQQALDDLQAEEDKVNTLTKSKVKLEQQVDDLEGSLEQEKKVRMDLERAKRKLEGDLKLTQESIMDLENDKQQLDEKLKKKDFELNALNARIEDEQALGSQLQKKLKELQARIEELEEELEAERTARAKVEKLRSDLSRELEEISERLEEAGGATSVQIEMNKKREAEFQKMRRDLEEATLQHEATAAALRKKHADSVAELGEQIDNLQRVKQKLEKEKSEFKLELDDVTSNMEQIIKAKANLEKMCRTLEDQMNEHRSKAEETQRSVNDLTSQRAKLQTENGELSRQLDEKEALISQLTRGKLTYTQQLEDLKRQLEEEVKAKNTLAHALQSARHDCDLLREQYEEETEAKAELQCVLSKANSEVAQWRTKYETDAIQRTEELEEAKKKLAQRLQDAEEAVEAVNAKCSSLEKTKHRLQNEIEDLMVDVERSNAAAAALDKKQRNFDKILAEWKQKYEESQSELESSQKEARSLSTELFKLKNAYEESLEHLETFKRENKNLQEEISDLTEQLGSTGKSIHELEKIRKQLEAEKMELQSALEEAEASLEHEEGNILRAQLEFNQIKAEIERKLAEKDEEMEQAKRNHLRVVDSLQTSLDAETRSRNEALRVKKKMEGDLNEMEIQLSHANRMAAEAQKQVKSLQSLLKDTQIQLDDAVRANDDLKENIAIVERRNNLLQAELEELRAVVEQTERSRKLAEQELIETSERVQLLHSQNTSLINQKKKMDADLSQLQTEVEEAVQECRNAEEKAKKAITDAAMMAEELKKEQDTSAHLERMKKNMEQTIKDLQHRLDEAEQIALKGGKKQLQKLEARVRELENELEAEQKRNAESVKGMRKSERRIKELTYQTEEDRKNLLRLQDLVDKLQLKVKAYKRQAEEAEEQANTNLSKFRKVQHELDEAEERADIAESQVNKLRAKSRDIGAKGLNEE.

Positions 31-80 (DLKKDVFVPDDKEEFVKAKIVSREGGKVTAETENGKTVTVKEDQVMQQNP) constitute a Myosin N-terminal SH3-like domain. Residues 84–777 (DKIEDMAMLT…LLGLLEEMRD (694 aa)) form the Myosin motor domain. K128 is modified (N6,N6,N6-trimethyllysine). 177–184 (GESGAGKT) serves as a coordination point for ATP. A Phosphothreonine modification is found at T377. Actin-binding stretches follow at residues 654–676 (LNKL…IPNE) and 756–770 (KFGH…GLLG). Residues 780–809 (LSRIITRIQAQSRGLLSRMEFKKLLERRDS) form the IQ domain. Positions 839–1934 (LKSAETEKEM…DIGAKGLNEE (1096 aa)) form a coiled coil. Phosphoserine occurs at positions 1136 and 1268. T1281 is subject to Phosphothreonine. Residue Y1307 is modified to Phosphotyrosine. T1308 is subject to Phosphothreonine. S1509 is subject to Phosphoserine. At T1512 the chain carries Phosphothreonine. The disordered stretch occupies residues 1914–1934 (SQVNKLRAKSRDIGAKGLNEE). Positions 1922 to 1934 (KSRDIGAKGLNEE) are enriched in basic and acidic residues.

This sequence belongs to the TRAFAC class myosin-kinesin ATPase superfamily. Myosin family. As to quaternary structure, muscle myosin is a hexameric protein that consists of 2 heavy chain subunits (MHC), 2 alkali light chain subunits (MLC) and 2 regulatory light chain subunits (MLC-2). Interacts with ECPAS. Interacts (via C-terminus) with LRRC39.

The protein resides in the cytoplasm. The protein localises to the myofibril. It localises to the sarcomere. In terms of biological role, myosins are actin-based motor molecules with ATPase activity essential for muscle contraction. Forms regular bipolar thick filaments that, together with actin thin filaments, constitute the fundamental contractile unit of skeletal and cardiac muscle. This chain is Myosin-7 (MYH7), found in Mesocricetus auratus (Golden hamster).